A 379-amino-acid chain; its full sequence is MNGSVGIVETKKVTFPEITLECGEKIAPVTVAYETYGELNERGDNAILILHALTGDAHVAGKHRPEDKVAGWWDPMVGPGRPFDTNKYFIVCSNVLGGCYGTTGPSSINPATGRPWGMSFPIITIRDMVNLQYKLVRHLGITKILAAVGGSMGGMQALEWAYMYPEMLKSVVAIATSARLSPFGIAFNAVGREAIMTDPEWRGGNYYGFEGPKRGLALARMIGIITYKSDISWQYRFGRTHTYETDQELFSHTSRFEIENYLYYQGDKLVKRFDANTYLYLLKAMDLHDISRGRGRYREILKELKTPLLAIGIDTDFLYPTYQQKEIVEALKEAKKEAYYWELSSPHGHDAFLIEFSKMAPILSNFLEYVAGRRATINF.

The 311-residue stretch at 45-355 (NAILILHALT…PHGHDAFLIE (311 aa)) folds into the AB hydrolase-1 domain. Catalysis depends on Ser-151, which acts as the Nucleophile. Arg-220 lines the substrate pocket. Active-site residues include Asp-316 and His-349. Residue Asp-350 coordinates substrate.

It belongs to the AB hydrolase superfamily. MetX family. In terms of assembly, homodimer.

Its subcellular location is the cytoplasm. It carries out the reaction L-homoserine + acetyl-CoA = O-acetyl-L-homoserine + CoA. It participates in amino-acid biosynthesis; L-methionine biosynthesis via de novo pathway; O-acetyl-L-homoserine from L-homoserine: step 1/1. Transfers an acetyl group from acetyl-CoA to L-homoserine, forming acetyl-L-homoserine. The chain is Homoserine O-acetyltransferase from Carboxydothermus hydrogenoformans (strain ATCC BAA-161 / DSM 6008 / Z-2901).